The chain runs to 524 residues: Beta-glucosidase 23 (524 aa).

The N-terminal stretch at 1-24 is a signal peptide; sequence MVLQKLPLIGLLLLLTIVASPANA. Q54 contributes to the a beta-D-glucoside binding site. The N-linked (GlcNAc...) asparagine glycan is linked to N60. A beta-D-glucoside is bound by residues H157 and 202 to 203; that span reads NE. The Proton donor role is filled by E203. A disulfide bridge links C222 with C230. Positions 346 and 418 each coordinate a beta-D-glucoside. E418 (nucleophile) is an active-site residue. An N-linked (GlcNAc...) asparagine glycan is attached at N461. Residues W468, 475-476, and F484 each bind a beta-D-glucoside; that span reads EW. Residue N494 is glycosylated (N-linked (GlcNAc...) asparagine). The Prevents secretion from ER signature appears at 521-524; it reads KDEL.

The protein belongs to the glycosyl hydrolase 1 family. Homodimers. Binds to the deubiquitinating enzyme AMSH3. The inactive form interacts with PBP1/JAL30 to form the PYK10 complex, at least composed of PYK10/BGLU23, BGLU21, BGLU22, JAL22, JAL23, PBP1/JAL30, PBP2/JAL31, JAL32, JAL33, JAL34, JAL35, GLL22 and GLL23. In terms of processing, forms interchain disulfide bonds. As to expression, expressed exclusively in roots.

Its subcellular location is the endoplasmic reticulum lumen. It catalyses the reaction Hydrolysis of terminal, non-reducing beta-D-glucosyl residues with release of beta-D-glucose.. With respect to regulation, activated by tissue damage and upon binding to PBP1 or PBP2. Its function is as follows. Beta-D-glucosidase active on scopolin &gt; esculin &gt;&gt; 4-MU-glucoside &gt;&gt; DIMBOA-glucoside. No activity with pNP-glucoside, oNP-glucoside and sinigrin as substrates. May possess beta-D-fucosidase activity. Required for the beneficial interaction with the endophytic fungus P.indica. May participate in the control of root colonization by P.indica by repressing defense responses and modulating other responses required for a mutualistic interaction. The chain is Beta-glucosidase 23 from Arabidopsis thaliana (Mouse-ear cress).